The primary structure comprises 318 residues: Basic leucine zipper (bZIP) transcription factor atfB (318 aa).

Positions 114–157 are disordered; sequence FNSSPPEYAPPKHRSSLSEQSQTDGYGVSTRRRKASAIDQCEQQ. A basic motif region spans residues 160 to 199; the sequence is REKREKFLERNRLAASKCRQKKKEHTKLLETRFREVSNKK. Residues 160-223 form the bZIP domain; sequence REKREKFLER…LNLKNEMLRH (64 aa). Residues 202–216 form a leucine-zipper region; that stretch reads LESEIEHLRSEVLNL. Residues 275-301 form a disordered region; sequence DGPMQLPSEMGSPLDQRRDSEQSIMTE.

The protein belongs to the bZIP family. ATF subfamily.

It is found in the nucleus. Its function is as follows. Transcription factor that acts as a key player in the regulatory circuit that integrates secondary metabolism and cellular response to oxidative stress. Regulates the genes involved in development and stress response through direct binding to their promoters. The protein is Basic leucine zipper (bZIP) transcription factor atfB of Aspergillus flavus (strain ATCC 200026 / FGSC A1120 / IAM 13836 / NRRL 3357 / JCM 12722 / SRRC 167).